The primary structure comprises 389 residues: Methylthioribose kinase (389 aa).

ATP is bound by residues Asn37, Lys52, and 106–108 (EDL). A substrate-binding site is contributed by Asp224. 241–243 (DPE) serves as a coordination point for ATP. Residue Arg331 coordinates substrate.

Belongs to the methylthioribose kinase family. In terms of assembly, homodimer.

The enzyme catalyses 5-(methylsulfanyl)-D-ribose + ATP = 5-(methylsulfanyl)-alpha-D-ribose 1-phosphate + ADP + H(+). Its pathway is amino-acid biosynthesis; L-methionine biosynthesis via salvage pathway; S-methyl-5-thio-alpha-D-ribose 1-phosphate from S-methyl-5'-thioadenosine (hydrolase route): step 2/2. In terms of biological role, catalyzes the phosphorylation of methylthioribose into methylthioribose-1-phosphate. The chain is Methylthioribose kinase from Exiguobacterium sibiricum (strain DSM 17290 / CCUG 55495 / CIP 109462 / JCM 13490 / 255-15).